The sequence spans 305 residues: Ornithine carbamoyltransferase, catabolic (305 aa).

Carbamoyl phosphate contacts are provided by residues 50 to 53 (STRT), Q77, R101, and 128 to 131 (HPLQ). Residues N159, D223, and 227-228 (SM) each bind L-ornithine. Residues 263-264 (CL) and R291 each bind carbamoyl phosphate.

The protein belongs to the aspartate/ornithine carbamoyltransferase superfamily. OTCase family.

It localises to the cytoplasm. It carries out the reaction carbamoyl phosphate + L-ornithine = L-citrulline + phosphate + H(+). It functions in the pathway amino-acid degradation; L-arginine degradation via ADI pathway; carbamoyl phosphate from L-arginine: step 2/2. Reversibly catalyzes the transfer of the carbamoyl group from carbamoyl phosphate (CP) to the N(epsilon) atom of ornithine (ORN) to produce L-citrulline. The chain is Ornithine carbamoyltransferase, catabolic from Thermoplasma acidophilum (strain ATCC 25905 / DSM 1728 / JCM 9062 / NBRC 15155 / AMRC-C165).